The following is a 267-amino-acid chain: Palmitoyltransferase ZDHHC12 (267 aa).

The Cytoplasmic portion of the chain corresponds to 1-9; the sequence is MAPWALLSP. A helical transmembrane segment spans residues 10-30; that stretch reads GVLVRTGHTVLTWGITLVLFL. The Lumenal segment spans residues 31-43; that stretch reads HDTELRQWEEQGE. Residues 44–64 traverse the membrane as a helical segment; the sequence is LLLPLTFLLLVLGSLLLYLAV. Over 65-140 the chain is Cytoplasmic; it reads SLMDPGYVNV…ENCVGERNHP (76 aa). In terms of domain architecture, DHHC spans 97 to 147; sequence RRCRYCLVLQPLRARHCRECRRCVRRYDHHCPWMENCVGERNHPLFVVYLA. Cysteine 127 serves as the catalytic S-palmitoyl cysteine intermediate. Residues 141 to 161 form a helical membrane-spanning segment; sequence LFVVYLALQLVVLLWGLYLAW. Residues 162–178 are Lumenal-facing; sequence SGLRFFQPWGQWLRSSG. A helical membrane pass occupies residues 179 to 199; that stretch reads LLFATFLLLSLFSLVASLLLV. At 200-267 the chain is on the cytoplasmic side; sequence SHLYLVASNT…EEEEGSSPAV (68 aa).

The protein belongs to the DHHC palmitoyltransferase family. As to expression, widely expressed.

The protein localises to the golgi apparatus membrane. It localises to the endoplasmic reticulum membrane. The enzyme catalyses L-cysteinyl-[protein] + hexadecanoyl-CoA = S-hexadecanoyl-L-cysteinyl-[protein] + CoA. Palmitoyltransferase that catalyzes the addition of palmitate onto various protein substrates. Has a palmitoyltransferase activity toward gephyrin/GPHN, regulating its clustering at synapses and its function in gamma-aminobutyric acid receptor clustering. Thereby, indirectly regulates GABAergic synaptic transmission. Negatively regulates NLRP3-driven inflammation. Catalyzes NLRP3 palmitoylation, leading to its degradation via the chaperone-mediated autophagy (CMA) process. The protein is Palmitoyltransferase ZDHHC12 of Homo sapiens (Human).